A 559-amino-acid polypeptide reads, in one-letter code: Sulfite reductase [NADPH] hemoprotein beta-component (559 aa).

Residues C423, C429, C468, and C472 each contribute to the [4Fe-4S] cluster site. Residue C472 coordinates siroheme.

This sequence belongs to the nitrite and sulfite reductase 4Fe-4S domain family. In terms of assembly, alpha(8)-beta(8). The alpha component is a flavoprotein, the beta component is a hemoprotein. The cofactor is siroheme. [4Fe-4S] cluster is required as a cofactor.

It catalyses the reaction hydrogen sulfide + 3 NADP(+) + 3 H2O = sulfite + 3 NADPH + 4 H(+). The protein operates within sulfur metabolism; hydrogen sulfide biosynthesis; hydrogen sulfide from sulfite (NADPH route): step 1/1. Functionally, component of the sulfite reductase complex that catalyzes the 6-electron reduction of sulfite to sulfide. This is one of several activities required for the biosynthesis of L-cysteine from sulfate. The sequence is that of Sulfite reductase [NADPH] hemoprotein beta-component from Thiocapsa roseopersicina.